The following is a 1100-amino-acid chain: MAPPSEETPLISQRSCSLSSSEAGALHVLLPPRGPGPPQRLSFSFGDYLAEDLCVRAAKACGILPVYHSLFALATEDLSCWFPPSHIFSIEDVDTQVLVYRLRFYFPGWFGLETCHRFGLHKDLTSAILDVHVLEHLFAQHRSDLVSGRLPVGLSLKDQGEFLSLAVLDLAQMARKQAQRPGELLKSVSYKACLPPSLRDLIQGQSFVTRRRIRRTVVQALRRVVACQADRYALMAKYILDLERLHPAATTESFLVGLPGAQEEPGCLRVTGDNGIAWSSKDQELFQTFCDFPEIVDVSIKQAPRVGPAGEHRLVTITRMDGHILEAEFPGLPEALSFVALVDGYFRLICDSRHFFCKEVAPPRLLEEEAELCHGPITLDFAIHKLKAAGSLPGSYILRRSPQDYDSFLLTACVQTPLGPDYKGCLIRQDPSGAFSLVGLSQLHRSLQELLTACWHSGLQVDGTALNLTSCCVPRPKEKSNLIVVRRGRNPTPAPGHSPSCCALTKLSFHTIPADSLEWHENLGHGSFTKIFHGHRREVVDGETHDTEVLLKVMDSRHQNCMESFLEAASLMSQVSYPHLVLLHGVCMAGDSIMVQEFVYLGAIDTYLRKRGHLVPASWKLQVTKQLAYALNYLEDKGLPHGNVSARKVLLAREGVDGNPPFIKLSDPGVSPTVLSLEMLTDRIPWVAPECLQEAGTLNLEADKWGFGATTWEVFSGAPMHITSLEPAKKLKFYEDRGQLPALKWTELEGLIAQCMAYDPGRRPSFRAILRDLNGLITSDYELLSDPTPGIPNPRDELCGGAQLYACQDPAIFEERHLKYISLLGKGNFGSVELCRYDPLGDNTGPLVAVKQLQHSGPEQQRDFQREIQILKALHCDFIVKYRGVSYGPGRQSLRLVMEYLPSGCLRDFLQRHRARLHNDRLLLFAWQICKGMEYLGARRCVHRDLAARNILVESEAHVKIADFGLAKLLPLGKDYYVVREPGQSPIFWYAPESLSDNIFSRQSDVWSFGVVLYELFTYSDKSCSPSTEFLRMMGPEREGSPLCHLLELLAEGRRLPPPSTCPTEVQELMQLCWSPNPQDRPAFDTLSPQLDALWRGSPG.

The segment at 1–223 (MAPPSEETPL…RRTVVQALRR (223 aa)) is cytokine/interferon/growth hormone receptors. Ser-17 carries the post-translational modification Phosphoserine. The 330-residue stretch at 24-353 (GALHVLLPPR…GYFRLICDSR (330 aa)) folds into the FERM domain. The SH2; atypical domain maps to 372 to 472 (LCHGPITLDF…GTALNLTSCC (101 aa)). Positions 517 to 777 (LEWHENLGHG…AILRDLNGLI (261 aa)) constitute a Protein kinase 1 domain. Phosphotyrosine; by autocatalysis is present on Tyr-781. Positions 818–1091 (LKYISLLGKG…PAFDTLSPQL (274 aa)) constitute a Protein kinase 2 domain. ATP is bound by residues 824-832 (LGKGNFGSV) and Lys-851. Tyr-900 and Tyr-935 each carry phosphotyrosine. Residue Asp-945 is the Proton acceptor of the active site. A phosphotyrosine; by autocatalysis mark is found at Tyr-976 and Tyr-977.

This sequence belongs to the protein kinase superfamily. Tyr protein kinase family. JAK subfamily. Interacts with STAM2 and MYO18A. Interacts with SHB. Interacts with CD69. Autophosphorylated, leading to regulate its activity. IL2 promotes phosphorylation on tyrosine residues, including autophosphorylation on Tyr-781. Dephosphorylation of Tyr-976 and Tyr-977 by PTPN2 negatively regulates cytokine-mediated signaling. In terms of tissue distribution, in contrast with the ubiquitous expression of the other JAKs, JAK3 is predominantly expressed in hematopoietic tissues.

The protein localises to the endomembrane system. Its subcellular location is the cytoplasm. The enzyme catalyses L-tyrosyl-[protein] + ATP = O-phospho-L-tyrosyl-[protein] + ADP + H(+). In terms of biological role, non-receptor tyrosine kinase involved in various processes such as cell growth, development, or differentiation. Mediates essential signaling events in both innate and adaptive immunity and plays a crucial role in hematopoiesis during T-cells development. In the cytoplasm, plays a pivotal role in signal transduction via its association with type I receptors sharing the common subunit gamma such as IL2R, IL4R, IL7R, IL9R, IL15R and IL21R. Following ligand binding to cell surface receptors, phosphorylates specific tyrosine residues on the cytoplasmic tails of the receptor, creating docking sites for STATs proteins. Subsequently, phosphorylates the STATs proteins once they are recruited to the receptor. Phosphorylated STATs then form homodimer or heterodimers and translocate to the nucleus to activate gene transcription. For example, upon IL2R activation by IL2, JAK1 and JAK3 molecules bind to IL2R beta (IL2RB) and gamma chain (IL2RG) subunits inducing the tyrosine phosphorylation of both receptor subunits on their cytoplasmic domain. Then, STAT5A and STAT5B are recruited, phosphorylated and activated by JAK1 and JAK3. Once activated, dimerized STAT5 translocates to the nucleus and promotes the transcription of specific target genes in a cytokine-specific fashion. The sequence is that of Tyrosine-protein kinase JAK3 from Rattus norvegicus (Rat).